A 592-amino-acid chain; its full sequence is MRSHYCGDVNKSHVGQEVTLVGWVNRSRDLGGVVFLDLRDREGLVQVVYDPDLPEVFAVASTLRAEFCVQVKGVVRARPDSQVNGQMKTGEIEVLGKALTIINAADPLPLSLDNYQNNSEEQRLKYRYLDLRRPEMAQRLMFRAKVTSAVRRFLDSNGFLDIETPILTKATPEGARDYLVPSRTYKGQFFALPQSPQLFKQLLMMSGFDRYYQIVKCFRDEDLRADRQPEFTQIDIETSFMTSEQVMAKTEEMMRGLFLEMLNVDLGEFPRMTYNEAMRRFGSDKPDLRNPLELVDIADLLKEVEFAVFSAPANDEEGRVAVLRIPGGAALSRKQIDDYTKFVGIYGAKGLAWMKINDLSLGLEGIQSPVLKFLNESIVNEIISRTGAQTGDIILFGADQATVVAESMGALRLKAGEDFSLLQGEWRPLWVVDFPMFEKINGNFHAVHHPFTAPRGVTAAELEANPANRVSDAYDMVLNGCELGGGSVRIHNQEMQSAVFRILGITDDEAKEKFGFLLEALRYGTPPHAGLAFGLDRIIMLMTGASSIRDVMAFPKTTTAACPLTNAPGFANPQQLAELGIAVVEKAVKTEG.

An L-aspartate-binding site is contributed by Glu173. Positions 197 to 200 are aspartate; sequence QLFK. Position 219 (Arg219) interacts with L-aspartate. ATP contacts are provided by residues 219–221 and Gln228; that span reads RDE. His448 serves as a coordination point for L-aspartate. Glu482 serves as a coordination point for ATP. Arg489 lines the L-aspartate pocket. 534–537 is a binding site for ATP; it reads GLDR.

The protein belongs to the class-II aminoacyl-tRNA synthetase family. Type 1 subfamily. In terms of assembly, homodimer.

The protein localises to the cytoplasm. It carries out the reaction tRNA(Asp) + L-aspartate + ATP = L-aspartyl-tRNA(Asp) + AMP + diphosphate. In terms of biological role, catalyzes the attachment of L-aspartate to tRNA(Asp) in a two-step reaction: L-aspartate is first activated by ATP to form Asp-AMP and then transferred to the acceptor end of tRNA(Asp). This is Aspartate--tRNA ligase from Shewanella putrefaciens (strain CN-32 / ATCC BAA-453).